Here is a 200-residue protein sequence, read N- to C-terminus: MELMVKGADALTVSETTFGREFNEALVHQVVVAYAAGARQGTRAQKTRSEVSGGGAKPWRQKGTGRARAGTIRSPIWRTGGVTFAAKPQDHSQKVNKKMYRGALKSILSELVRQDRLIVVDNFSVEAPKTKELVAKLKELELNDVLIVTGEVDENLFLAARNLYKVDARDVAGIDPVSLVAFDKVLMTAAAVKQVEEMLA.

The segment at 42 to 65 is disordered; sequence TRAQKTRSEVSGGGAKPWRQKGTG.

The protein belongs to the universal ribosomal protein uL4 family. As to quaternary structure, part of the 50S ribosomal subunit.

One of the primary rRNA binding proteins, this protein initially binds near the 5'-end of the 23S rRNA. It is important during the early stages of 50S assembly. It makes multiple contacts with different domains of the 23S rRNA in the assembled 50S subunit and ribosome. Functionally, forms part of the polypeptide exit tunnel. This chain is Large ribosomal subunit protein uL4, found in Aliivibrio fischeri (strain MJ11) (Vibrio fischeri).